A 221-amino-acid polypeptide reads, in one-letter code: Interleukin-12 subunit alpha (221 aa).

A signal peptide spans 1-25; that stretch reads MCPLRSLLLISTLVLLHHLPHLSLG. 3 cysteine pairs are disulfide-bonded: cysteine 39–cysteine 112, cysteine 66–cysteine 198, and cysteine 87–cysteine 125. An N-linked (GlcNAc...) asparagine glycan is attached at asparagine 95.

This sequence belongs to the IL-6 superfamily. As to quaternary structure, heterodimer with IL12B; disulfide-linked. This heterodimer is known as interleukin IL-12. Heterodimer with EBI3/IL27B; not disulfide-linked. This heterodimer is known as interleukin IL-35. Interacts with NBR1; this interaction promotes IL-12 secretion.

It is found in the secreted. Heterodimerizes with IL12B to form the IL-12 cytokine or with EBI3/IL27B to form the IL-35 cytokine. IL-12 is primarily produced by professional antigen-presenting cells (APCs) such as B-cells and dendritic cells (DCs) as well as macrophages and granulocytes and regulates T-cell and natural killer-cell responses, induces the production of interferon-gamma (IFN-gamma), favors the differentiation of T-helper 1 (Th1) cells and is an important link between innate resistance and adaptive immunity. Mechanistically, exerts its biological effects through a receptor composed of IL12R1 and IL12R2 subunits. Binding to the receptor results in the rapid tyrosine phosphorylation of a number of cellular substrates including the JAK family kinases TYK2 and JAK2. In turn, recruited STAT4 gets phosphorylated and translocates to the nucleus where it regulates cytokine/growth factor responsive genes. As part of IL-35, plays essential roles in maintaining the immune homeostasis of the liver microenvironment and also functions as an immune-suppressive cytokine. Mediates biological events through unconventional receptors composed of IL12RB2 and gp130/IL6ST heterodimers or homodimers. Signaling requires the transcription factors STAT1 and STAT4, which form a unique heterodimer that binds to distinct DNA sites. The sequence is that of Interleukin-12 subunit alpha (IL12A) from Bos taurus (Bovine).